Reading from the N-terminus, the 317-residue chain is uncharacterized protein (317 aa).

To M.avium MAV169.

This is an uncharacterized protein from Mycobacterium tuberculosis (strain CDC 1551 / Oshkosh).